We begin with the raw amino-acid sequence, 288 residues long: Ice-binding protein (288 aa).

Residues 1 to 22 (MFSTTLINTFSLGLLAVVSVVA) form the signal peptide. Short sequence motifs (ice-binding site motif (T-A/G-X-T/N)) lie at residues 75 to 78 (TAGN) and 154 to 157 (TAFN). N194 carries N-linked (GlcNAc...) asparagine glycosylation. 2 consecutive short sequence motifs (ice-binding site motif (T-A/G-X-T/N)) follow at residues 196-199 (TGVT) and 265-268 (TGAT).

This sequence belongs to the ice-binding protein family.

It localises to the secreted. Functionally, binds ice crystals and most probably inhibits their growth in order to prevent cell damage from extracellular ice. This chain is Ice-binding protein, found in Lentinula edodes (Shiitake mushroom).